The following is a 292-amino-acid chain: T-box transcription factor tbx-9 (292 aa).

The segment at residues Gly10 to Asp194 is a DNA-binding region (T-box). Disordered regions lie at residues Phe192–Pro227 and Ser265–Gly292. 2 stretches are compositionally biased toward low complexity: residues Pro204–Pro223 and Ser265–Ser275. Residues Glu280–Gly292 show a composition bias toward acidic residues.

The protein resides in the nucleus. In terms of biological role, transcription factor. Involved in the control of early morphogenesis of the intestine, hypodermis and body-wall muscle. Involved in regulating expression of vab-7. Appears to have partially redundant function to tbx-8. Positively modulates expression of homeobox protein lin-39, perhaps by binding to regulatory regions of the lin-39 gene, acting in the vulval lineage. The sequence is that of T-box transcription factor tbx-9 (tbx-9) from Caenorhabditis elegans.